We begin with the raw amino-acid sequence, 103 residues long: Co-chaperonin GroES (103 aa).

Residues 31–67 are disordered; that stretch reads GGILLPDTAKEKPQVGEVAQVGPGKRNEDGSRQSPEV.

This sequence belongs to the GroES chaperonin family. In terms of assembly, heptamer of 7 subunits arranged in a ring. Interacts with the chaperonin GroEL.

The protein localises to the cytoplasm. Together with the chaperonin GroEL, plays an essential role in assisting protein folding. The GroEL-GroES system forms a nano-cage that allows encapsulation of the non-native substrate proteins and provides a physical environment optimized to promote and accelerate protein folding. GroES binds to the apical surface of the GroEL ring, thereby capping the opening of the GroEL channel. The sequence is that of Co-chaperonin GroES from Prochlorococcus marinus (strain NATL2A).